The sequence spans 498 residues: Probable FAD-binding monooxygenase AlmA (498 aa).

Residues 4-24 traverse the membrane as a helical segment; sequence HIDILIVGAGISGIGIAAHLS. Positions 15, 36, 56, 62, and 104 each coordinate FAD. Position 54 to 56 (54 to 56) interacts with NADP(+); the sequence is RSD. NADP(+)-binding positions include 184–190, 208–209, and 292–293; these read SGATAIT, RS, and RL. Val395 is an FAD binding site.

This sequence belongs to the FAD-binding monooxygenase family. Requires FAD as cofactor.

The protein resides in the cell membrane. Its pathway is hydrocarbon metabolism; alkane degradation. In terms of biological role, is able to catalyze the degradation of n-alkanes with C chain lengths of 32 and 36. Probably allows Acinetobacter baylyi strain ADP1 to grow on the long-chain n-alkane dotriacontane (C32H66) as a sole carbon source. This Acinetobacter baylyi (strain ATCC 33305 / BD413 / ADP1) protein is Probable FAD-binding monooxygenase AlmA.